Here is a 128-residue protein sequence, read N- to C-terminus: 14 kDa zinc-binding protein (128 aa).

Residues Ile18–Gly128 form the HIT domain. A Histidine triad motif motif is present at residues His112 to His116.

As to quaternary structure, homodimer.

The sequence is that of 14 kDa zinc-binding protein (ZBP14) from Zea mays (Maize).